Consider the following 398-residue polypeptide: Cytochrome b (398 aa).

Helical transmembrane passes span 38–58 (FGPLAGICLVIQIVTGVFLAM), 82–104 (WFLRYMHANGASMFLIVVHFHMF), 119–139 (VRCSGVVIFLLMIVTAFIGYV), and 185–205 (FFSLHYLLPFLLVGASILHLG). Heme b contacts are provided by histidine 88 and histidine 102. Histidine 189 and histidine 203 together coordinate heme b. Histidine 208 contacts a ubiquinone. A run of 4 helical transmembrane segments spans residues 231–251 (YYVKDLVGWVAFAIFSSIFIF), 295–316 (AGGVAAIAPVFICLLALPFLNQ), 328–348 (IYHIIYLLFLADRLLLGWIGC), and 355–374 (FVTIGQISPFVFFLFFAIMP).

It belongs to the cytochrome b family. As to quaternary structure, the main subunits of complex b-c1 are: cytochrome b, cytochrome c1 and the Rieske protein. It depends on heme b as a cofactor.

Its subcellular location is the mitochondrion inner membrane. Component of the ubiquinol-cytochrome c reductase complex (complex III or cytochrome b-c1 complex) that is part of the mitochondrial respiratory chain. The b-c1 complex mediates electron transfer from ubiquinol to cytochrome c. Contributes to the generation of a proton gradient across the mitochondrial membrane that is then used for ATP synthesis. This chain is Cytochrome b (MT-CYB), found in Daucus carota (Wild carrot).